The following is a 97-amino-acid chain: Venom peptide HsVx1 (97 aa).

The signal sequence occupies residues 1–20 (MSHLRIAVTFLCTLFALTAG).

Belongs to the scorpion La1-like peptide family. Post-translationally, contains 4 disulfide bonds. As to expression, expressed by the venom gland.

The protein localises to the secreted. In Heterometrus spinifer (Asia giant forest scorpion), this protein is Venom peptide HsVx1.